Here is a 345-residue protein sequence, read N- to C-terminus: S-adenosylmethionine:tRNA ribosyltransferase-isomerase (345 aa).

It belongs to the QueA family. Monomer.

The protein resides in the cytoplasm. It carries out the reaction 7-aminomethyl-7-carbaguanosine(34) in tRNA + S-adenosyl-L-methionine = epoxyqueuosine(34) in tRNA + adenine + L-methionine + 2 H(+). Its pathway is tRNA modification; tRNA-queuosine biosynthesis. Transfers and isomerizes the ribose moiety from AdoMet to the 7-aminomethyl group of 7-deazaguanine (preQ1-tRNA) to give epoxyqueuosine (oQ-tRNA). This Acinetobacter baumannii (strain AB0057) protein is S-adenosylmethionine:tRNA ribosyltransferase-isomerase.